Reading from the N-terminus, the 84-residue chain is Beta-cardiotoxin CTX14 (84 aa).

A signal peptide spans 1 to 21 (MKTLLLTLVVVTIVCLDLGYT). Cystine bridges form between C24–C43, C36–C61, C65–C76, and C77–C82.

It belongs to the three-finger toxin family. Short-chain subfamily. Aminergic toxin sub-subfamily. Expressed by the venom gland.

It is found in the secreted. Its function is as follows. Acts as a beta-blocker by binding to beta-1 and beta-2 adrenergic receptors (ADRB1 and ADRB2). It dose-dependently decreases the heart rate (bradycardia), whereas conventional cardiotoxins increases it. At 100 mg/kg, intraperitoneal injection into mice provokes labored breathing, impaired locomotion, lack of response to external stimuli, and death (after 30 minutes). The chain is Beta-cardiotoxin CTX14 from Ophiophagus hannah (King cobra).